The following is a 611-amino-acid chain: Oxidoreductase cicC (611 aa).

A signal peptide spans methionine 1 to alanine 20. FAD contacts are provided by residues asparagine 45 to alanine 46 and glutamate 65 to alanine 66. Asparagine 76 and asparagine 113 each carry an N-linked (GlcNAc...) asparagine glycan. Residues valine 123 and asparagine 131–threonine 134 each bind FAD. N-linked (GlcNAc...) asparagine glycosylation is found at asparagine 282, asparagine 410, and asparagine 475. The active-site Proton acceptor is histidine 547. Histidine 547 (proton donor) is an active-site residue. Alanine 581 serves as a coordination point for FAD. The active-site Proton acceptor is histidine 591. Residue proline 592–isoleucine 593 coordinates FAD.

Belongs to the GMC oxidoreductase family. Requires FAD as cofactor.

It functions in the pathway phytotoxin biosynthesis. Oxidoreductase; part of the gene cluster that mediates the biosynthesis of cichorine, a phytotoxin active against knapweed, corn, and soybeans. The first step in the pathway is performed by the non-reducing polyketide synthase pkbA that condenses one acetyl-CoA starter unit with 3 malonyl-CoA units. PkbA also catalyzes one methylation step to produce 3-methylorsellinate. The nonribosomal peptide synthase-like protein cicB, the cytochrome P450 monooxygenase cicH and the O-methyltransferase cicE are involved in the conversion of 3-methylorsellinate into nidulol. CicB converts 3-methylorsellinate to a yet unidentified intermediate, cicH may play a ring-closing role for cichorine and cicE is plausibly responsible for the methylation of one of the phenol groups. The oxidoreductase cicC acts downstream with still unidentified enzymes to further convert nidulol into cichorine. In Emericella nidulans (strain FGSC A4 / ATCC 38163 / CBS 112.46 / NRRL 194 / M139) (Aspergillus nidulans), this protein is Oxidoreductase cicC.